We begin with the raw amino-acid sequence, 331 residues long: High-affinity nickel-transport protein NixA (331 aa).

Topologically, residues methionine 1 to phenylalanine 5 are cytoplasmic. The chain crosses the membrane as a helical span at residues proline 6–asparagine 26. At asparagine 27–alanine 33 the chain is on the periplasmic side. The helical transmembrane segment at alanine 34 to isoleucine 54 threads the bilayer. Topologically, residues aspartate 55–lysine 66 are cytoplasmic. The helical transmembrane segment at asparagine 67 to threonine 87 threads the bilayer. Residues isoleucine 88–threonine 113 lie on the Periplasmic side of the membrane. Residues leucine 114–leucine 135 traverse the membrane as a helical segment. At lysine 136 to lysine 178 the chain is on the cytoplasmic side. Residues serine 179–isoleucine 199 traverse the membrane as a helical segment. At alanine 200–alanine 225 the chain is on the periplasmic side. Residues glycine 226 to phenylalanine 246 traverse the membrane as a helical segment. Over lysine 247–lysine 252 the chain is Cytoplasmic. The helical transmembrane segment at isoleucine 253 to isoleucine 273 threads the bilayer. Topologically, residues glutamate 274–aspartate 302 are periplasmic. The helical transmembrane segment at leucine 303–tryptophan 322 threads the bilayer. The Cytoplasmic portion of the chain corresponds to lysine 323 to serine 331.

This sequence belongs to the NiCoT transporter (TC 2.A.52) family.

Its subcellular location is the cell inner membrane. High-affinity nickel intake protein. Imports nickel ions in an energy-dependent fashion. Necessary for the expression of catalytically active urease. The chain is High-affinity nickel-transport protein NixA (nixA) from Helicobacter pylori (strain ATCC 700392 / 26695) (Campylobacter pylori).